The following is a 149-amino-acid chain: Large ribosomal subunit protein bL9 (149 aa).

It belongs to the bacterial ribosomal protein bL9 family.

In terms of biological role, binds to the 23S rRNA. The sequence is that of Large ribosomal subunit protein bL9 from Proteus mirabilis (strain HI4320).